The following is a 152-amino-acid chain: Ribosome maturation factor RimP (152 aa).

It belongs to the RimP family.

It localises to the cytoplasm. Its function is as follows. Required for maturation of 30S ribosomal subunits. The sequence is that of Ribosome maturation factor RimP from Salmonella arizonae (strain ATCC BAA-731 / CDC346-86 / RSK2980).